The sequence spans 764 residues: Protective antigen (764 aa).

The N-terminal stretch at 1–29 (MKKRKVLIPLMALSTILVSSTGNLEVIQA) is a signal peptide. The interval 30–287 (EVKQENRLLN…PEARHPLVAA (258 aa)) is domain 1, calcium-binding; LF and EF binding sites. The PA14 domain occupies 43-179 (SSSQGLLGYY…NKKEVISSDN (137 aa)). The disordered stretch occupies residues 176–214 (SSDNLQLPELKQKSSNSRKKRSTSAGPTVPDRDNDGIPD). Positions 206, 208, 210, 212, and 217 each coordinate Ca(2+). Residues 231–239 (FLSPWISNI) form an alpha-clamp region. Serine 251, lysine 254, and aspartate 264 together coordinate Ca(2+). The tract at residues 288–516 (YPIVHVDMEN…SEVLPQIQET (229 aa)) is domain 2, membrane insertion and heptamerization. A disordered region spans residues 302–333 (KNEDQSTQNTDSQTRTISKNTSTSRTHTSEVH). A compositionally biased stretch (polar residues) spans 306 to 327 (QSTQNTDSQTRTISKNTSTSRT). A run of 2 beta stranded transmembrane segments spans residues 331-342 (EVHGNAEVHASF) and 345-354 (IGGSVSAGFS). The tract at residues 517–624 (TARIIFNGKD…KMNILIRDKR (108 aa)) is domain 3, heptamerization. The domain 4, binding to the receptor stretch occupies residues 625–764 (FHYDRNNIAV…IFSKKGYEIG (140 aa)).

It belongs to the bacterial binary toxin family. Interacts with host ANTXR1 and ANTXR2. As to quaternary structure, homooligomer; homooligomerizes to form homoheptamers (PA-63(7)) or homooctamers (PA-63(8)). PA-63(7) or PA-63(8) form ring-shaped oligomers that are in a pre-pore conformation, which do not penetrate the host membrane. PA-63(8) displays an enhanced stability, suggesting that this form circulates in the blood to reach and exert toxicity even in distant tissues. Interacts with lethal factor (LF) and edema factor (EF); can bind LF and EF simultaneously and interaction takes place following homooligomerization on the host cell membrane. PA-63(7) homoheptamer interacts with three molecules of LF to form the PA(7)LF(3) complex, in which the relative position of the N-terminal alpha-helices in the three LFs determines which factor is translocated first. In terms of processing, proteolytic activation by FURIN cleaves the protein in two parts, PA-20 and PA-63; the latter is the mature protein. The cleavage occurs at the cell surface and probably in the serum of infected animals as well; both native and cleaved PA are able to bind to the cell receptor. The release of PA-20 from the remaining receptor-bound PA-63 exposes the binding site for EF and LF, and promotes oligomerization and internalization of the protein.

The protein resides in the secreted. It is found in the host cell membrane. Its subcellular location is the host endosome membrane. In terms of biological role, protective antigen constitutes one of the three proteins composing the anthrax toxin; it mediates attachment to host cells and translocation of edema factor (EF) and lethal factor (LF) into the host cytoplasm. PA associated with LF forms the lethal toxin (LeTx) and causes death when injected; PA associated with EF forms the edema toxin (EdTx) and produces edema. PA induces immunity to infection with anthrax. Functionally, mediates the attachment to host cells by binding host cell receptors ANTXR1 and ANTXR2. Following host cell surface attachment, PA is cleaved by FURIN to generate the PA-63 (Protective antigen PA-63) form, which constitutes the mature form of the protein that oligomerizes and forms a pore to translocate the enzymatic toxin components edema factor (EF) and lethal factor (LF) into the host cytosol. Its function is as follows. Mature form that oligomerizes and forms a pore to translocate the enzymatic toxin components edema factor (EF) and lethal factor (LF) into the host cytosol. Following attachment to host cell receptors and cleavage by FURIN, homooligomerizes to form ring-shaped oligomers that are in a pre-pore conformation, and associates with EF and LF. Toxin-leaded complexes are then endocytosed in a clathrin-dependent process, followed by a conformational change of oligomerized PA-63 from the pre-pore to pore state, which is triggered by the low pH in the endosome. Once active, the pore mediates unfolding of EF and LF, which pass through the pore and translocate into the host cytosol. This chain is Protective antigen (pagA), found in Bacillus anthracis.